Consider the following 126-residue polypeptide: Glycine cleavage system H protein (126 aa).

In terms of domain architecture, Lipoyl-binding spans 22 to 104 (VAIIGITEYA…YEKAWMVKVE (83 aa)). The residue at position 63 (Lys-63) is an N6-lipoyllysine.

This sequence belongs to the GcvH family. In terms of assembly, the glycine cleavage system is composed of four proteins: P, T, L and H. (R)-lipoate serves as cofactor.

In terms of biological role, the glycine cleavage system catalyzes the degradation of glycine. The H protein shuttles the methylamine group of glycine from the P protein to the T protein. Its function is as follows. Is also involved in protein lipoylation via its role as an octanoyl/lipoyl carrier protein intermediate. This Staphylococcus aureus (strain USA300) protein is Glycine cleavage system H protein.